The following is a 410-amino-acid chain: Structure-specific endonuclease subunit SLX1 homolog (410 aa).

One can recognise a GIY-YIG domain in the interval 6 to 89 (QLHYCYFLLS…NICKVTRDNI (84 aa)).

The protein belongs to the SLX1 family. Forms a heterodimer with a member of the SLX4 family. It depends on a divalent metal cation as a cofactor.

The protein localises to the nucleus. Catalytic subunit of a heterodimeric structure-specific endonuclease that resolves DNA secondary structures generated during DNA repair and recombination. Has endonuclease activity towards branched DNA substrates, introducing single-strand cuts in duplex DNA close to junctions with ss-DNA. The chain is Structure-specific endonuclease subunit SLX1 homolog from Cryptosporidium parvum (strain Iowa II).